Consider the following 1162-residue polypeptide: Nucleoporin nup132 (1162 aa).

It belongs to the nucleoporin Nup133 family. In terms of assembly, component of the npc107-120 complex which consists of nup85, nup107, nup120, nup131, nup132 and seh1. Interacts with nup107.

Its subcellular location is the nucleus envelope. Functionally, functions as a component of the nuclear pore complex (NPC). NPC components, collectively referred to as nucleoporins (NUPs), can play the role of both NPC structural components and of docking or interaction partners for transiently associated nuclear transport factors. Active directional transport is assured by both, a Phe-Gly (FG) repeat affinity gradient for these transport factors across the NPC and a transport cofactor concentration gradient across the nuclear envelope. The protein is Nucleoporin nup132 (nup132) of Schizosaccharomyces pombe (strain 972 / ATCC 24843) (Fission yeast).